We begin with the raw amino-acid sequence, 209 residues long: Uracil phosphoribosyltransferase (209 aa).

5-phospho-alpha-D-ribose 1-diphosphate is bound by residues Arg79, Arg104, and 131–139 (DPMLATGGS). Uracil is bound by residues Ile194 and 199 to 201 (GDA). Residue Asp200 coordinates 5-phospho-alpha-D-ribose 1-diphosphate.

The protein belongs to the UPRTase family. It depends on Mg(2+) as a cofactor.

The catalysed reaction is UMP + diphosphate = 5-phospho-alpha-D-ribose 1-diphosphate + uracil. The protein operates within pyrimidine metabolism; UMP biosynthesis via salvage pathway; UMP from uracil: step 1/1. Its activity is regulated as follows. Allosterically activated by GTP. Catalyzes the conversion of uracil and 5-phospho-alpha-D-ribose 1-diphosphate (PRPP) to UMP and diphosphate. The chain is Uracil phosphoribosyltransferase from Lysinibacillus sphaericus (strain C3-41).